A 365-amino-acid chain; its full sequence is Peptide chain release factor 1 (365 aa).

Q240 bears the N5-methylglutamine mark.

It belongs to the prokaryotic/mitochondrial release factor family. Post-translationally, methylated by PrmC. Methylation increases the termination efficiency of RF1.

The protein localises to the cytoplasm. Peptide chain release factor 1 directs the termination of translation in response to the peptide chain termination codons UAG and UAA. This chain is Peptide chain release factor 1, found in Bifidobacterium animalis subsp. lactis (strain AD011).